The chain runs to 383 residues: Acetylornithine deacetylase (383 aa).

His80 lines the Zn(2+) pocket. Asp82 is an active-site residue. A Zn(2+)-binding site is contributed by Asp112. Glu144 is an active-site residue. Zn(2+)-binding residues include Glu145, Glu169, and His355.

The protein belongs to the peptidase M20A family. ArgE subfamily. Homodimer. The cofactor is Zn(2+). Co(2+) is required as a cofactor. It depends on glutathione as a cofactor.

It localises to the cytoplasm. The catalysed reaction is N(2)-acetyl-L-ornithine + H2O = L-ornithine + acetate. The protein operates within amino-acid biosynthesis; L-arginine biosynthesis; L-ornithine from N(2)-acetyl-L-ornithine (linear): step 1/1. Its function is as follows. Catalyzes the hydrolysis of the amide bond of N(2)-acetylated L-amino acids. Cleaves the acetyl group from N-acetyl-L-ornithine to form L-ornithine, an intermediate in L-arginine biosynthesis pathway, and a branchpoint in the synthesis of polyamines. This Salmonella typhimurium (strain LT2 / SGSC1412 / ATCC 700720) protein is Acetylornithine deacetylase.